The primary structure comprises 121 residues: Small ribosomal subunit protein uS13 (121 aa).

The interval 94–121 (GLPVRGQNTKNNARTRKGPRRTVANKKK) is disordered. Positions 106 to 121 (ARTRKGPRRTVANKKK) are enriched in basic residues.

Belongs to the universal ribosomal protein uS13 family. As to quaternary structure, part of the 30S ribosomal subunit. Forms a loose heterodimer with protein S19. Forms two bridges to the 50S subunit in the 70S ribosome.

Functionally, located at the top of the head of the 30S subunit, it contacts several helices of the 16S rRNA. In the 70S ribosome it contacts the 23S rRNA (bridge B1a) and protein L5 of the 50S subunit (bridge B1b), connecting the 2 subunits; these bridges are implicated in subunit movement. Contacts the tRNAs in the A and P-sites. The chain is Small ribosomal subunit protein uS13 from Geobacillus kaustophilus (strain HTA426).